The primary structure comprises 148 residues: Ubiquitin-like protein 4A (148 aa).

A Ubiquitin-like domain is found at 1–76; sequence MQLTVKALKG…LNLMVKEQVA (76 aa).

Component of the bag6/bat3 complex.

The protein resides in the cytoplasm. The protein localises to the cytosol. It is found in the nucleus. Its function is as follows. As part of a cytosolic protein quality control complex, the bag6/bat3 complex, maintains misfolded and hydrophobic patches-containing proteins in a soluble state and participates in their proper delivery to the endoplasmic reticulum or alternatively can promote their sorting to the proteasome where they undergo degradation. The bag6/bat3 complex is involved in the post-translational delivery of tail-anchored/type II transmembrane proteins to the endoplasmic reticulum membrane. Similarly, the bag6/bat3 complex also functions as a sorting platform for proteins of the secretory pathway that are mislocalized to the cytosol either delivering them to the proteasome for degradation or to the endoplasmic reticulum. The bag6/bat3 complex also plays a role in the endoplasmic reticulum-associated degradation (ERAD), a quality control mechanism that eliminates unwanted proteins of the endoplasmic reticulum through their retrotranslocation to the cytosol and their targeting to the proteasome. It maintains these retrotranslocated proteins in an unfolded yet soluble state condition in the cytosol to ensure their proper delivery to the proteasome. This Xenopus tropicalis (Western clawed frog) protein is Ubiquitin-like protein 4A (ubl4a).